The following is a 388-amino-acid chain: MTQHQDAIAPHGGSLINRVASETQKQDLLAKGDSLPRVQLDKRATSDLEMIAIGGFSPLSGFMGQADYEQVVHHMHLDNGLPWSIPVTLSVDEGVADSLNVGDLVRLDDPTGAFVGVLELTEKYTYDKTQEAVQVYKTDEMKHPGVKVVFEQGAVNLAGPVWLLERQAHPQFPSYQIDPAASRQLFRERGWNTIVGFQTRNPIHRAHEYIQKCALETVDGLFLHPLVGATKSDDIPADVRMRCYEIMMEHYFPEDRVILAINPAAMRYAGPREAIFHALVRKNYGCTHFIVGRDHAGVGDYYGTYDAQHIFDTLDAQALGITPMKFEHAFYCKKTLSMATTKTSPSGPEDRVHLSGTKVREMLRRGELPPPEFSRPEVASELAAAMKA.

Belongs to the sulfate adenylyltransferase family.

The enzyme catalyses sulfate + ATP + H(+) = adenosine 5'-phosphosulfate + diphosphate. It participates in sulfur metabolism; hydrogen sulfide biosynthesis; sulfite from sulfate: step 1/3. This is Sulfate adenylyltransferase from Acaryochloris marina (strain MBIC 11017).